The primary structure comprises 389 residues: Mitochondrial carrier homolog 1 (389 aa).

Residues 1–78 are disordered; sequence MGASDPEVAP…PGAPGSGDNA (78 aa). Residues 1 to 93 are Mitochondrial intermembrane-facing; that stretch reads MGASDPEVAP…LFVALGAGVT (93 aa). Positions 15 to 33 are enriched in gly residues; it reads GAAGMAGAGAGAGARGGAP. R29 is modified (omega-N-methylarginine). 2 Solcar repeats span residues 81–176 and 192–280; these read TEAL…FPPD and KKVV…INAY. A helical transmembrane segment spans residues 94–104; the sequence is ALSHPLLYVKL. At 105–155 the chain is on the cytoplasmic side; sequence LIQVGHEPMPPTLGTNVLGRKVLYLPSFFTYAKYIVQVDGKIGLFRGLSPR. A helical transmembrane segment spans residues 156–176; sequence LMSNALSTVTRGSMKKVFPPD. Topologically, residues 177–209 are mitochondrial intermembrane; the sequence is EMEQVSNKDDMKTSLKKVVKETSYEMMMQCVSR. A helical membrane pass occupies residues 210–229; the sequence is MLAHPLHVISMRCMVQFVGR. Residues 230–254 lie on the Cytoplasmic side of the membrane; it reads EAKYSGVLSSIGKIFKEEGLLGFFV. Residues 255–279 form a helical membrane-spanning segment; sequence GLIPHLLGDVVFLWGCNLLAHFINA. Over 280–322 the chain is Mitochondrial intermembrane; sequence YLVDDSVSDTPGGLGNDQNPGSQFSQALAIRSYTKFVMGIAVS. The chain crosses the membrane as a helical span at residues 323–342; the sequence is MLTYPFLLVGDLMAVNNCGL. Residues 343–371 lie on the Cytoplasmic side of the membrane; that stretch reads RAGLPPYSPVFKSWIHCWKYLSVQGQLFR. Residues 372 to 389 form a helical membrane-spanning segment; it reads GSSLLFRRVSSGSCFALE.

It belongs to the mitochondrial carrier (TC 2.A.29) family. As to quaternary structure, interacts with PSEN1.

It is found in the mitochondrion outer membrane. In terms of biological role, protein insertase that mediates insertion of transmembrane proteins into the mitochondrial outer membrane. Catalyzes insertion of proteins with alpha-helical transmembrane regions, such as signal-anchored, tail-anchored and multi-pass membrane proteins. Does not mediate insertion of beta-barrel transmembrane proteins. May play a role in apoptosis. The sequence is that of Mitochondrial carrier homolog 1 (Mtch1) from Mus musculus (Mouse).